The sequence spans 241 residues: Pyridoxine 5'-phosphate synthase (241 aa).

Asparagine 7 serves as a coordination point for 3-amino-2-oxopropyl phosphate. Aspartate 9 to histidine 10 contacts 1-deoxy-D-xylulose 5-phosphate. Residue arginine 18 participates in 3-amino-2-oxopropyl phosphate binding. Histidine 43 acts as the Proton acceptor in catalysis. Residues arginine 45 and histidine 50 each contribute to the 1-deoxy-D-xylulose 5-phosphate site. The active-site Proton acceptor is the glutamate 70. Threonine 100 contributes to the 1-deoxy-D-xylulose 5-phosphate binding site. The Proton donor role is filled by histidine 190. 3-amino-2-oxopropyl phosphate-binding positions include glycine 191 and glycine 212 to histidine 213.

It belongs to the PNP synthase family. As to quaternary structure, homooctamer; tetramer of dimers.

It is found in the cytoplasm. The catalysed reaction is 3-amino-2-oxopropyl phosphate + 1-deoxy-D-xylulose 5-phosphate = pyridoxine 5'-phosphate + phosphate + 2 H2O + H(+). It functions in the pathway cofactor biosynthesis; pyridoxine 5'-phosphate biosynthesis; pyridoxine 5'-phosphate from D-erythrose 4-phosphate: step 5/5. Its function is as follows. Catalyzes the complicated ring closure reaction between the two acyclic compounds 1-deoxy-D-xylulose-5-phosphate (DXP) and 3-amino-2-oxopropyl phosphate (1-amino-acetone-3-phosphate or AAP) to form pyridoxine 5'-phosphate (PNP) and inorganic phosphate. The polypeptide is Pyridoxine 5'-phosphate synthase (Bordetella avium (strain 197N)).